The primary structure comprises 404 residues: Spore germination protein YndF (404 aa).

The N-terminal stretch at 1–24 (MKSKLKRQLPAMVIVCLLMICVTG) is a signal peptide. Cys-25 is lipidated: N-palmitoyl cysteine. Cys-25 carries the S-diacylglycerol cysteine lipid modification.

The protein belongs to the GerABKC lipoprotein family.

It localises to the cell membrane. In terms of biological role, may be involved in spore germination. The protein is Spore germination protein YndF (yndF) of Bacillus subtilis (strain 168).